Reading from the N-terminus, the 373-residue chain is Protein-glutamate methylesterase/protein-glutamine glutaminase 2 (373 aa).

One can recognise a Response regulatory domain in the interval 4–121 (KVLVVDDSGF…SRNPEKVKQL (118 aa)). A 4-aspartylphosphate modification is found at Asp55. Positions 136–181 (FSSYSAPAPQPASAPAPAPSSFASSRSPAPAPAPARAAAPAASANS) are disordered. Residues 143 to 153 (APQPASAPAPA) are compositionally biased toward pro residues. Residues 154 to 181 (PSSFASSRSPAPAPAPARAAAPAASANS) show a composition bias toward low complexity. In terms of domain architecture, CheB-type methylesterase spans 182–370 (PAPKRKAYKL…LDDIGRHLVE (189 aa)). Active-site residues include Ser197, His224, and Asp317.

This sequence belongs to the CheB family. Post-translationally, phosphorylated by CheA. Phosphorylation of the N-terminal regulatory domain activates the methylesterase activity.

Its subcellular location is the cytoplasm. It catalyses the reaction [protein]-L-glutamate 5-O-methyl ester + H2O = L-glutamyl-[protein] + methanol + H(+). The enzyme catalyses L-glutaminyl-[protein] + H2O = L-glutamyl-[protein] + NH4(+). In terms of biological role, involved in chemotaxis. Part of a chemotaxis signal transduction system that modulates chemotaxis in response to various stimuli. Catalyzes the demethylation of specific methylglutamate residues introduced into the chemoreceptors (methyl-accepting chemotaxis proteins or MCP) by CheR. Also mediates the irreversible deamidation of specific glutamine residues to glutamic acid. The polypeptide is Protein-glutamate methylesterase/protein-glutamine glutaminase 2 (Pseudomonas fluorescens (strain ATCC BAA-477 / NRRL B-23932 / Pf-5)).